The chain runs to 182 residues: Lipoprotein signal peptidase (182 aa).

The next 3 helical transmembrane spans lie at 21 to 41, 74 to 94, and 98 to 118; these read LLLS…VLAV, GYTW…FWMG, and VSPW…GNLV. Residues Asp134 and Asp148 contribute to the active site. The helical transmembrane segment at 146 to 166 threads the bilayer; sequence VADPSVVGGAILLVVLSIFGY.

The protein belongs to the peptidase A8 family.

Its subcellular location is the cell membrane. It catalyses the reaction Release of signal peptides from bacterial membrane prolipoproteins. Hydrolyzes -Xaa-Yaa-Zaa-|-(S,diacylglyceryl)Cys-, in which Xaa is hydrophobic (preferably Leu), and Yaa (Ala or Ser) and Zaa (Gly or Ala) have small, neutral side chains.. Its pathway is protein modification; lipoprotein biosynthesis (signal peptide cleavage). In terms of biological role, this protein specifically catalyzes the removal of signal peptides from prolipoproteins. The polypeptide is Lipoprotein signal peptidase (Mycobacterium avium (strain 104)).